A 397-amino-acid chain; its full sequence is Mycinamicin IV hydroxylase/epoxidase (397 aa).

The disordered stretch occupies residues 63-86 (RGPSMTRDEPRTRPEMVKGGLLSM). A compositionally biased stretch (basic and acidic residues) spans 68–78 (TRDEPRTRPEM). Gly-81 contributes to the substrate binding site. Positions 91, 95, 288, 344, and 346 each coordinate heme.

This sequence belongs to the cytochrome P450 family. Heme is required as a cofactor.

Its pathway is antibiotic biosynthesis; mycinamicin biosynthesis. In terms of biological role, involved in the biosynthesis of mycinamicin, a 16-membered macrolide antibiotic. Catalyzes consecutive hydroxylation (at C14) and epoxidation (at C12-C13) reactions with mycinamicin IV as initial substrate, leading to mycinamicin II. These reactions require prior dimethylation of 6-deoxyallose to mycinose for effective conversion by the dual function MycG enzyme. This chain is Mycinamicin IV hydroxylase/epoxidase, found in Micromonospora griseorubida.